Here is a 328-residue protein sequence, read N- to C-terminus: MANSASPEQNQNHCSASNSSIPLTQANLPTLTLSGKIRVTVTFFLFLLSTTFNASFLLKLHKWTQKKENGKKLSKMKVLLKHLTLANLLETLIVMPLDGMWNITVQWYAGELLCKVLSYLKLFSMYAPAFMMVVISLDRSLAITRPLAVKSNSKLGRSMIGLAWLLSSIFAGPQLYIFRMIHLADSSGQTEGFSQCVTHCSFPQWWHQAFYNFFTFSCLFIIPLLFMLICNAKIIFTLTRVLHQDPHKLQLNQSKNNIPRARLRTLKMTVAFATSFTVCWTPYYVLGIWYWFDPEMLNRVSDPVNHFFFLFALLNPCFDPLIYGYFSL.

Residues 1–38 (MANSASPEQNQNHCSASNSSIPLTQANLPTLTLSGKIR) lie on the Extracellular side of the membrane. N18 is a glycosylation site (N-linked (GlcNAc...) asparagine). The chain crosses the membrane as a helical span at residues 39–59 (VTVTFFLFLLSTTFNASFLLK). Over 60–84 (LHKWTQKKENGKKLSKMKVLLKHLT) the chain is Cytoplasmic. Residues 85 to 105 (LANLLETLIVMPLDGMWNITV) traverse the membrane as a helical segment. Residues 106–115 (QWYAGELLCK) are Extracellular-facing. A disulfide bridge connects residues C114 and C196. Residues 116 to 136 (VLSYLKLFSMYAPAFMMVVIS) form a helical membrane-spanning segment. The Cytoplasmic portion of the chain corresponds to 137-157 (LDRSLAITRPLAVKSNSKLGR). Residues 158-178 (SMIGLAWLLSSIFAGPQLYIF) form a helical membrane-spanning segment. Topologically, residues 179-208 (RMIHLADSSGQTEGFSQCVTHCSFPQWWHQ) are extracellular. The helical transmembrane segment at 209–229 (AFYNFFTFSCLFIIPLLFMLI) threads the bilayer. Residues 230 to 271 (CNAKIIFTLTRVLHQDPHKLQLNQSKNNIPRARLRTLKMTVA) are Cytoplasmic-facing. The helical transmembrane segment at 272-292 (FATSFTVCWTPYYVLGIWYWF) threads the bilayer. Residues 293–306 (DPEMLNRVSDPVNH) lie on the Extracellular side of the membrane. The helical transmembrane segment at 307 to 327 (FFFLFALLNPCFDPLIYGYFS) threads the bilayer. Residue L328 is a topological domain, cytoplasmic.

This sequence belongs to the G-protein coupled receptor 1 family.

It is found in the cell membrane. Functionally, receptor for gonadotropin releasing hormone (GnRH) that mediates the action of GnRH to stimulate the secretion of the gonadotropic hormones luteinizing hormone (LH) and follicle-stimulating hormone (FSH). This receptor mediates its action by association with G-proteins that activate a phosphatidylinositol-calcium second messenger system. The chain is Gonadotropin-releasing hormone receptor (GNRHR) from Equus caballus (Horse).